Reading from the N-terminus, the 399-residue chain is MTSYSYRQSSSTSSFGGMGGGSMRFGAGGAFRAPSIHGGSGGRGVSVSSARFVSSSSGGYGGGYGGALATSDGLLAGNEKLTMQNLNDRLASYLEKVRALEEANGDLEVKIRDWYQKQGPGPARDYSHYFKTIEDLRDQILGATIENSKIVLQIDNARLAADDFRTKFETEQALRMSVEADINGLRRVLDELTLARTDLEMQIEGLKEELAYLKKNHEEEMSVLKGQVGGQVSVEVDSAPGIDLAKILSDMRSQYEVIAEKNRKDAEAWFISQTEELNREVAGHTEQLQISKTEVTDLRRTLQGLEIELQSQLSMKAALEGTLAETEARFGAQLAQIQALISGIEAQLSDVRADTERQNQEYQHLMDIKTRLEQEIATYRNLLEGQDAYFNDLSLAKAL.

Positions 1–78 (MTSYSYRQSS…ATSDGLLAGN (78 aa)) are head. Residue R7 is modified to Omega-N-methylarginine. A phosphoserine mark is found at S14 and S22. R24 carries the asymmetric dimethylarginine; alternate modification. At R24 the chain carries Omega-N-methylarginine; alternate. R32 is modified (omega-N-methylarginine). 2 positions are modified to phosphoserine: S35 and S40. Omega-N-methylarginine occurs at positions 43 and 51. Residues S57 and S71 each carry the phosphoserine modification. Positions 79–114 (EKLTMQNLNDRLASYLEKVRALEEANGDLEVKIRDW) are coil 1A. In terms of domain architecture, IF rod spans 79 to 390 (EKLTMQNLND…NLLEGQDAYF (312 aa)). Residues 115 to 132 (YQKQGPGPARDYSHYFKT) form a linker 1 region. Residues 133–224 (IEDLRDQILG…KNHEEEMSVL (92 aa)) are coil 1B. The interval 225 to 247 (KGQVGGQVSVEVDSAPGIDLAKI) is linker 12. The tract at residues 243-389 (DLAKILSDMR…RNLLEGQDAY (147 aa)) is necessary for interaction with PNN. The interval 248–386 (LSDMRSQYEV…ATYRNLLEGQ (139 aa)) is coil 2. T322 carries the phosphothreonine modification. The interval 387-399 (DAYFNDLSLAKAL) is rod-like helical tail. S394 carries the phosphoserine modification.

This sequence belongs to the intermediate filament family. In terms of assembly, heterotetramer of two type I and two type II keratins. Interacts with PNN and the actin-binding domain of DMD.

Involved in the organization of myofibers. Together with KRT8, helps to link the contractile apparatus to dystrophin at the costameres of striated muscle. This is Keratin, type I cytoskeletal 19 (KRT19) from Bos taurus (Bovine).